Consider the following 280-residue polypeptide: Diaminopimelate epimerase (280 aa).

2 residues coordinate substrate: asparagine 14 and asparagine 67. The Proton donor role is filled by cysteine 76. Substrate-binding positions include 77-78 (GN), asparagine 193, and 210-211 (ER). Cysteine 220 serves as the catalytic Proton acceptor. Position 221–222 (221–222 (GT)) interacts with substrate.

This sequence belongs to the diaminopimelate epimerase family. Homodimer.

It localises to the cytoplasm. The catalysed reaction is (2S,6S)-2,6-diaminopimelate = meso-2,6-diaminopimelate. The protein operates within amino-acid biosynthesis; L-lysine biosynthesis via DAP pathway; DL-2,6-diaminopimelate from LL-2,6-diaminopimelate: step 1/1. Its function is as follows. Catalyzes the stereoinversion of LL-2,6-diaminopimelate (L,L-DAP) to meso-diaminopimelate (meso-DAP), a precursor of L-lysine. This is Diaminopimelate epimerase from Methanocella arvoryzae (strain DSM 22066 / NBRC 105507 / MRE50).